Here is a 230-residue protein sequence, read N- to C-terminus: Somatolactin (230 aa).

Positions 1–23 are cleaved as a signal peptide; the sequence is MIKTKVLQAWMGIWLCAVNGLLG. 3 cysteine pairs are disulfide-bonded: cysteine 28–cysteine 38, cysteine 87–cysteine 202, and cysteine 219–cysteine 227. An N-linked (GlcNAc...) asparagine glycan is attached at asparagine 177.

The protein belongs to the somatotropin/prolactin family.

The protein localises to the secreted. The protein is Somatolactin of Ictalurus punctatus (Channel catfish).